We begin with the raw amino-acid sequence, 287 residues long: 1-acyl-sn-glycerol-3-phosphate acyltransferase alpha (287 aa).

Residues Met1 to Trp26 form the signal peptide. The Lumenal segment spans residues Phe27–Lys37. A helical transmembrane segment spans residues Met38 to Val58. Residues Arg59 to Arg127 are Cytoplasmic-facing. An HXXXXD motif motif is present at residues His104–Asp109. Residues Glu128–Asp148 traverse the membrane as a helical segment. Residues Arg149–Arg192 are Lumenal-facing. Residues Glu178–Arg181 carry the EGTR motif motif.

Belongs to the 1-acyl-sn-glycerol-3-phosphate acyltransferase family.

Its subcellular location is the endoplasmic reticulum membrane. It catalyses the reaction a 1-acyl-sn-glycero-3-phosphate + an acyl-CoA = a 1,2-diacyl-sn-glycero-3-phosphate + CoA. It carries out the reaction 1-(9Z-octadecenoyl)-sn-glycero-3-phosphate + (9Z)-octadecenoyl-CoA = 1,2-di-(9Z-octadecenoyl)-sn-glycero-3-phosphate + CoA. The enzyme catalyses 1-(9Z-octadecenoyl)-sn-glycero-3-phosphate + hexadecanoyl-CoA = 1-(9Z)-octadecenoyl-2-hexadecanoyl-sn-glycero-3-phosphate + CoA. The catalysed reaction is heptadecanoyl-CoA + 1-(9Z-octadecenoyl)-sn-glycero-3-phosphate = 1-(9Z)-octadecenoyl-2-heptadecanoyl-sn-glycero-3-phosphate + CoA. It catalyses the reaction 1-(9Z-octadecenoyl)-sn-glycero-3-phosphate + octadecanoyl-CoA = 1-(9Z-octadecenoyl)-2-octadecanoyl-sn-glycero-3-phosphate + CoA. It carries out the reaction 1-(9Z-octadecenoyl)-sn-glycero-3-phosphate + (9Z,12Z)-octadecadienoyl-CoA = 1-(9Z)-octadecenoyl-2-(9Z,12Z)-octadecadienoyl-sn-glycero-3-phosphate + CoA. The enzyme catalyses 1-(9Z-octadecenoyl)-sn-glycero-3-phosphate + tetradecanoyl-CoA = 1-(9Z)-octadecenoyl-2-tetradecanoyl-sn-glycero-3-phosphate + CoA. The catalysed reaction is pentadecanoyl-CoA + 1-(9Z-octadecenoyl)-sn-glycero-3-phosphate = 1-(9Z)-octadecenoyl-2-pentadecanoyl-sn-glycero-3-phosphate + CoA. It catalyses the reaction 1-hexadecanoyl-sn-glycero-3-phosphate + (9Z)-octadecenoyl-CoA = 1-hexadecanoyl-2-(9Z-octadecenoyl)-sn-glycero-3-phosphate + CoA. It carries out the reaction 1-(9Z,12Z,15Z)-octadecatrienoyl-sn-glycero-3-phosphate + (9Z)-octadecenoyl-CoA = 1-(9Z,12Z,15Z)-octadecatrienoyl-2-(9Z)-octadecenoyl-sn-glycero-3-phosphate + CoA. The enzyme catalyses 1-(6Z,9Z,12Z-octadecatrienoyl)-sn-glycero-3-phosphate + (9Z)-octadecenoyl-CoA = (6Z,9Z,12Z)-octadecatrienoyl-2-(9Z)-octadecenoyl-sn-glycero-3-phosphate + CoA. The catalysed reaction is 1-eicosanoyl-sn-glycero-3-phosphate + (9Z)-octadecenoyl-CoA = 1-eicosanoyl-2-(9Z)-octadecenoyl-sn-glycero-3-phosphate + CoA. It catalyses the reaction 1-tetradecanoyl-sn-glycerol 3-phosphate + (9Z)-octadecenoyl-CoA = 1-tetradecanoyl-2-(9Z)-octadecenoyl-sn-glycero-3-phosphate + CoA. It carries out the reaction 1-(9Z-octadecenoyl)-sn-glycero-3-phosphate + (5Z,8Z,11Z,14Z)-eicosatetraenoyl-CoA = 1-(9Z)-octadecenoyl-2-(5Z,8Z,11Z,14Z)-eicosatetraenoyl-sn-glycero-3-phosphate + CoA. The enzyme catalyses 1-(9Z-octadecenoyl)-sn-glycero-3-phosphate + dodecanoyl-CoA = 1-(9Z)-octadecenoyl-2-dodecanoyl-sn-glycero-3-phosphate + CoA. The catalysed reaction is (6Z)-octadecenoyl-CoA + 1-(9Z-octadecenoyl)-sn-glycero-3-phosphate = 1-(9Z)-octadecenoyl-2-(6Z)-octadecenoyl-sn-glycero-3-phosphate + CoA. It catalyses the reaction (11Z)-octadecenoyl-CoA + 1-(9Z-octadecenoyl)-sn-glycero-3-phosphate = 1-(9Z)-octadecenoyl-2-(11Z)-octadecenoyl-sn-glycero-3-phosphate + CoA. It carries out the reaction (9Z)-hexadecenoyl-CoA + 1-(9Z-octadecenoyl)-sn-glycero-3-phosphate = 1-(9Z-octadecenoyl)-2-(9Z-hexadecenoyl)-sn-glycero-3-phosphate + CoA. The protein operates within phospholipid metabolism; CDP-diacylglycerol biosynthesis; CDP-diacylglycerol from sn-glycerol 3-phosphate: step 2/3. Functionally, converts 1-acyl-sn-glycerol-3-phosphate (lysophosphatidic acid or LPA) into 1,2-diacyl-sn-glycerol-3-phosphate (phosphatidic acid or PA) by incorporating an acyl moiety at the sn-2 position of the glycerol backbone. The sequence is that of 1-acyl-sn-glycerol-3-phosphate acyltransferase alpha (AGPAT1) from Ovis aries (Sheep).